Reading from the N-terminus, the 59-residue chain is Chromatin protein Cren7 (59 aa).

This sequence belongs to the Cren7 family. As to quaternary structure, monomer. Post-translationally, methylated at multiple sites, to varying extents.

It localises to the chromosome. Its subcellular location is the cytoplasm. In terms of biological role, a chromatin protein, binds double-stranded DNA without sequence specificity. Constrains negative DNA supercoils. This chain is Chromatin protein Cren7, found in Pyrobaculum aerophilum (strain ATCC 51768 / DSM 7523 / JCM 9630 / CIP 104966 / NBRC 100827 / IM2).